A 277-amino-acid chain; its full sequence is Shikimate dehydrogenase (NADP(+)) (277 aa).

Shikimate is bound by residues 15-17 (SLS) and Thr62. Catalysis depends on Lys66, which acts as the Proton acceptor. Positions 87 and 102 each coordinate shikimate. NADP(+) contacts are provided by residues 127 to 131 (GAGGA), 151 to 156 (NRTVDK), and Ile219. Shikimate is bound at residue Tyr221. Position 242 (Gly242) interacts with NADP(+).

Belongs to the shikimate dehydrogenase family. In terms of assembly, homodimer.

The catalysed reaction is shikimate + NADP(+) = 3-dehydroshikimate + NADPH + H(+). It functions in the pathway metabolic intermediate biosynthesis; chorismate biosynthesis; chorismate from D-erythrose 4-phosphate and phosphoenolpyruvate: step 4/7. Its function is as follows. Involved in the biosynthesis of the chorismate, which leads to the biosynthesis of aromatic amino acids. Catalyzes the reversible NADPH linked reduction of 3-dehydroshikimate (DHSA) to yield shikimate (SA). The protein is Shikimate dehydrogenase (NADP(+)) of Bacillus cereus (strain ZK / E33L).